The chain runs to 121 residues: Small ribosomal subunit protein bS6m (121 aa).

Belongs to the bacterial ribosomal protein bS6 family. Component of the mitochondrial ribosome small subunit (28S) which comprises a 12S rRNA and about 30 distinct proteins.

Its subcellular location is the mitochondrion. The sequence is that of Small ribosomal subunit protein bS6m (MRPS6) from Gallus gallus (Chicken).